A 187-amino-acid chain; its full sequence is Putative manganese efflux pump MntP (187 aa).

6 helical membrane passes run tyrosine 3 to glycine 23, isoleucine 39 to serine 59, isoleucine 65 to isoleucine 85, leucine 106 to phenylalanine 126, valine 129 to glycine 149, and leucine 166 to phenylalanine 186.

The protein belongs to the MntP (TC 9.B.29) family.

The protein localises to the cell inner membrane. Functionally, probably functions as a manganese efflux pump. The protein is Putative manganese efflux pump MntP of Actinobacillus succinogenes (strain ATCC 55618 / DSM 22257 / CCUG 43843 / 130Z).